We begin with the raw amino-acid sequence, 177 residues long: F(420)H(2) dehydrogenase subunit I (177 aa).

The segment at 1–21 (MGCPEVQDRPGSGYELEETPA) is disordered. 2 consecutive 4Fe-4S ferredoxin-type domains span residues 76–105 (GLQTLDKSKCIGCGICANTCPNSAIKIVKA) and 116–145 (WFPQIDIGHCLFCGLCIDQCPKGALSSGKE). The [4Fe-4S] cluster site is built by Cys85, Cys88, Cys91, Cys95, Cys125, Cys128, Cys131, and Cys135.

The protein belongs to the complex I 23 kDa subunit family. As to quaternary structure, the FPO complex is composed of at least 13 different subunits. [4Fe-4S] cluster serves as cofactor.

It catalyses the reaction methanophenazine + reduced coenzyme F420-(gamma-L-Glu)(n) = dihydromethanophenazine + oxidized coenzyme F420-(gamma-L-Glu)(n) + H(+). In terms of biological role, component of the F(420)H(2) dehydrogenase (FPO complex) which is part of the energy-conserving F(420)H(2):heterodisulfide oxidoreductase system. The membrane-bound electron transfer system of the complex plays an important role in the metabolism of methylotrophic methanogens when the organisms grow on methanol or methylamines. Catalyzes the oxidation of methanophenazine to dihydromethanophenazine. It shuttles electrons from F(420)H(2), via FAD and iron-sulfur (Fe-S) centers, to methanophenazine (an electron carrier in the membrane). It couples the redox reaction to proton translocation (for every two electrons transferred, two hydrogen ions are translocated across the cytoplasmic membrane), and thus conserves the redox energy in a proton gradient. It also catalyzes the oxidation of F(420)H(2) with quinones such as 2,3-dimethyl-1,4-naphthoquinone, 2-methyl-1,4-naphthoquinone and tetramethyl-p-benzoquinone. The protein is F(420)H(2) dehydrogenase subunit I (fpoI) of Methanosarcina mazei (strain ATCC BAA-159 / DSM 3647 / Goe1 / Go1 / JCM 11833 / OCM 88) (Methanosarcina frisia).